Reading from the N-terminus, the 102-residue chain is NADH-quinone oxidoreductase subunit K (102 aa).

The next 3 membrane-spanning stretches (helical) occupy residues 6 to 26 (LEHG…GLMV), 30 to 50 (ILFV…AFVV), and 62 to 82 (VMFI…LAIL).

Belongs to the complex I subunit 4L family. In terms of assembly, NDH-1 is composed of 13 different subunits. Subunits NuoA, H, J, K, L, M, N constitute the membrane sector of the complex.

Its subcellular location is the cell inner membrane. The catalysed reaction is a quinone + NADH + 5 H(+)(in) = a quinol + NAD(+) + 4 H(+)(out). Functionally, NDH-1 shuttles electrons from NADH, via FMN and iron-sulfur (Fe-S) centers, to quinones in the respiratory chain. The immediate electron acceptor for the enzyme in this species is believed to be ubiquinone. Couples the redox reaction to proton translocation (for every two electrons transferred, four hydrogen ions are translocated across the cytoplasmic membrane), and thus conserves the redox energy in a proton gradient. The polypeptide is NADH-quinone oxidoreductase subunit K (Pseudomonas syringae pv. tomato (strain ATCC BAA-871 / DC3000)).